Reading from the N-terminus, the 208-residue chain is Putative dioxygenase RBE_0329 (208 aa).

The protein belongs to the intradiol ring-cleavage dioxygenase family.

The sequence is that of Putative dioxygenase RBE_0329 from Rickettsia bellii (strain RML369-C).